A 209-amino-acid chain; its full sequence is MSKVHVFDHPLIQHKMTIMRKVETGTKQFRELVDEVASLMAYELTRDLPLTDVEIETPVTKTTQKMIEGKKLGIVPILRAGLGMVDGMLRMMPNVKVGHIGLYRDPETLEPTEYYLKLPTDVAERDFVVVDPMLATGGSAADAISSLKKQGAQSIKLACLCAAPEGVKRIQEEHPDVDIYLAALDEKLNDHGYIVPGLGDAGDRLFGTK.

5-phospho-alpha-D-ribose 1-diphosphate-binding positions include arginine 79, arginine 104, and 131 to 139 (DPMLATGGS). Uracil-binding positions include isoleucine 194 and 199-201 (GDA). Aspartate 200 is a binding site for 5-phospho-alpha-D-ribose 1-diphosphate.

This sequence belongs to the UPRTase family. Mg(2+) serves as cofactor.

It carries out the reaction UMP + diphosphate = 5-phospho-alpha-D-ribose 1-diphosphate + uracil. Its pathway is pyrimidine metabolism; UMP biosynthesis via salvage pathway; UMP from uracil: step 1/1. With respect to regulation, allosterically activated by GTP. Its function is as follows. Catalyzes the conversion of uracil and 5-phospho-alpha-D-ribose 1-diphosphate (PRPP) to UMP and diphosphate. This chain is Uracil phosphoribosyltransferase, found in Exiguobacterium sibiricum (strain DSM 17290 / CCUG 55495 / CIP 109462 / JCM 13490 / 255-15).